Here is a 199-residue protein sequence, read N- to C-terminus: Holliday junction branch migration complex subunit RuvA (199 aa).

The domain I stretch occupies residues 1-64 (MIGRISGLLL…EDGHFLYGFA (64 aa)). Positions 65–143 (TDEERTAFRQ…KALPQVAGAR (79 aa)) are domain II. A flexible linker region spans residues 144–154 (LAAVAGGAPDA). Residues 154-199 (AKSDILNALLALGYNEKEALGAMKGLAEDTGVSDGIRQALKLLSKA) are domain III.

This sequence belongs to the RuvA family. As to quaternary structure, homotetramer. Forms an RuvA(8)-RuvB(12)-Holliday junction (HJ) complex. HJ DNA is sandwiched between 2 RuvA tetramers; dsDNA enters through RuvA and exits via RuvB. An RuvB hexamer assembles on each DNA strand where it exits the tetramer. Each RuvB hexamer is contacted by two RuvA subunits (via domain III) on 2 adjacent RuvB subunits; this complex drives branch migration. In the full resolvosome a probable DNA-RuvA(4)-RuvB(12)-RuvC(2) complex forms which resolves the HJ.

It localises to the cytoplasm. Functionally, the RuvA-RuvB-RuvC complex processes Holliday junction (HJ) DNA during genetic recombination and DNA repair, while the RuvA-RuvB complex plays an important role in the rescue of blocked DNA replication forks via replication fork reversal (RFR). RuvA specifically binds to HJ cruciform DNA, conferring on it an open structure. The RuvB hexamer acts as an ATP-dependent pump, pulling dsDNA into and through the RuvAB complex. HJ branch migration allows RuvC to scan DNA until it finds its consensus sequence, where it cleaves and resolves the cruciform DNA. The sequence is that of Holliday junction branch migration complex subunit RuvA from Azoarcus sp. (strain BH72).